A 638-amino-acid polypeptide reads, in one-letter code: 1-deoxy-D-xylulose-5-phosphate synthase (638 aa).

Thiamine diphosphate-binding positions include His81 and 122–124; that span reads GHS. Asp153 contributes to the Mg(2+) binding site. Residues 154–155, Asn182, Tyr293, and Glu377 contribute to the thiamine diphosphate site; that span reads GS. A Mg(2+)-binding site is contributed by Asn182.

The protein belongs to the transketolase family. DXPS subfamily. As to quaternary structure, homodimer. It depends on Mg(2+) as a cofactor. Thiamine diphosphate is required as a cofactor.

It carries out the reaction D-glyceraldehyde 3-phosphate + pyruvate + H(+) = 1-deoxy-D-xylulose 5-phosphate + CO2. Its pathway is metabolic intermediate biosynthesis; 1-deoxy-D-xylulose 5-phosphate biosynthesis; 1-deoxy-D-xylulose 5-phosphate from D-glyceraldehyde 3-phosphate and pyruvate: step 1/1. In terms of biological role, catalyzes the acyloin condensation reaction between C atoms 2 and 3 of pyruvate and glyceraldehyde 3-phosphate to yield 1-deoxy-D-xylulose-5-phosphate (DXP). This Oleidesulfovibrio alaskensis (strain ATCC BAA-1058 / DSM 17464 / G20) (Desulfovibrio alaskensis) protein is 1-deoxy-D-xylulose-5-phosphate synthase.